Consider the following 316-residue polypeptide: Alpha- and gamma-adaptin-binding protein p34 (316 aa).

The tract at residues 198-232 (ASAESCHSEQQEPSPTAERTESLPGHHSGACGSAG) is disordered. Residues 222-232 (GHHSGACGSAG) are compositionally biased toward low complexity. Residues S311 and S312 each carry the phosphoserine modification.

As to quaternary structure, associated with AP-1 and AP-2 complexes.

Its subcellular location is the cytoplasm. The protein resides in the cytosol. Its function is as follows. May be involved in endocytic recycling of growth factor receptors such as EGFR. The chain is Alpha- and gamma-adaptin-binding protein p34 (Aagab) from Mus musculus (Mouse).